A 649-amino-acid polypeptide reads, in one-letter code: Endoplasmic reticulum membrane protein 65 (649 aa).

Residues 1 to 55 (MGSNTSPGQADPLESENESSLTSRFLPNKRDGGKDNESVIPEKEEPDLNEPVLAV) form a disordered region. Residues 1–165 (MGSNTSPGQA…LATPYAIEKT (165 aa)) are Cytoplasmic-facing. The span at 28-43 (NKRDGGKDNESVIPEK) shows a compositional bias: basic and acidic residues. Serine 94 carries the post-translational modification Phosphoserine. Residues 166–186 (FLFGWFVSVDSFLYIFTLFPI) form a helical membrane-spanning segment. Over 187–302 (RVLISFFTLS…NFWNPAGWMT (116 aa)) the chain is Lumenal. N-linked (GlcNAc...) asparagine glycosylation occurs at asparagine 215. Residues 303–323 (FFYYFAISLAYMVLHTLVLLY) form a helical membrane-spanning segment. At 324 to 366 (QIITLNVTVNSYSNAVLALLMSNQLVEIKGAVFKKFEKENLFQ) the chain is on the cytoplasmic side. The chain crosses the membrane as a helical span at residues 367-387 (LTCSDVVERFQITIMVIIIFL). Topologically, residues 388–414 (RNLAELYTTSSLDQPLLTFKRLKTLLA) are lumenal. The helical transmembrane segment at 415–435 (PFFWVIGSELFVDWLKHAFII) threads the bilayer. At 436-479 (KFNYIKPSIYSRFTDVLCHDYVASGAQLTQTVTGCSQQVARRMG) the chain is on the cytoplasmic side. The helical transmembrane segment at 480–500 (LPVLPLVCVFIRTSMQTWSMF) threads the bilayer. The Lumenal segment spans residues 501-557 (RSTHSMKQEIAKSIGTIFPTKDNYVYYLPNKEANTYNAGKEASWETLLLSVVRGKSG). Residues 558-578 (IAFLFFMAIMLKLLLGKAILA) traverse the membrane as a helical segment. Over 579–649 (ITQSRYESMQ…RYAMHSKRIW (71 aa)) the chain is Cytoplasmic.

The protein belongs to the TAPT1 family. In terms of assembly, interacts with slp1.

It is found in the endoplasmic reticulum membrane. Its function is as follows. May be involved in membrane protein folding. This Schizosaccharomyces pombe (strain 972 / ATCC 24843) (Fission yeast) protein is Endoplasmic reticulum membrane protein 65.